The following is a 189-amino-acid chain: dCTP deaminase, dUMP-forming (189 aa).

DCTP contacts are provided by residues 101 to 106 (KSSLGR), Asp-119, 127 to 129 (TLE), Gln-148, Tyr-162, and Gln-174. Catalysis depends on Glu-129, which acts as the Proton donor/acceptor.

The protein belongs to the dCTP deaminase family. In terms of assembly, homotrimer.

It carries out the reaction dCTP + 2 H2O = dUMP + NH4(+) + diphosphate. It functions in the pathway pyrimidine metabolism; dUMP biosynthesis; dUMP from dCTP: step 1/1. Its function is as follows. Bifunctional enzyme that catalyzes both the deamination of dCTP to dUTP and the hydrolysis of dUTP to dUMP without releasing the toxic dUTP intermediate. The sequence is that of dCTP deaminase, dUMP-forming from Rhodococcus opacus (strain B4).